Reading from the N-terminus, the 330-residue chain is tRNA U34 carboxymethyltransferase (330 aa).

Carboxy-S-adenosyl-L-methionine contacts are provided by residues lysine 91, tryptophan 105, lysine 110, glycine 130, 152–154 (DPS), 181–182 (IE), methionine 196, tyrosine 200, and arginine 315.

This sequence belongs to the class I-like SAM-binding methyltransferase superfamily. CmoB family. In terms of assembly, homotetramer.

It catalyses the reaction carboxy-S-adenosyl-L-methionine + 5-hydroxyuridine(34) in tRNA = 5-carboxymethoxyuridine(34) in tRNA + S-adenosyl-L-homocysteine + H(+). In terms of biological role, catalyzes carboxymethyl transfer from carboxy-S-adenosyl-L-methionine (Cx-SAM) to 5-hydroxyuridine (ho5U) to form 5-carboxymethoxyuridine (cmo5U) at position 34 in tRNAs. In Shewanella amazonensis (strain ATCC BAA-1098 / SB2B), this protein is tRNA U34 carboxymethyltransferase.